Reading from the N-terminus, the 447-residue chain is Probable glycine dehydrogenase (decarboxylating) subunit 1 (447 aa).

Belongs to the GcvP family. N-terminal subunit subfamily. As to quaternary structure, the glycine cleavage system is composed of four proteins: P, T, L and H. In this organism, the P 'protein' is a heterodimer of two subunits.

It catalyses the reaction N(6)-[(R)-lipoyl]-L-lysyl-[glycine-cleavage complex H protein] + glycine + H(+) = N(6)-[(R)-S(8)-aminomethyldihydrolipoyl]-L-lysyl-[glycine-cleavage complex H protein] + CO2. Functionally, the glycine cleavage system catalyzes the degradation of glycine. The P protein binds the alpha-amino group of glycine through its pyridoxal phosphate cofactor; CO(2) is released and the remaining methylamine moiety is then transferred to the lipoamide cofactor of the H protein. This is Probable glycine dehydrogenase (decarboxylating) subunit 1 from Bacillus mycoides (strain KBAB4) (Bacillus weihenstephanensis).